The sequence spans 146 residues: Leghemoglobin 49 (146 aa).

The region spanning 2-146 (GFTQQQEALV…LATAIKKAMS (145 aa)) is the Globin domain. Nitrated tyrosine occurs at positions 24 and 29. Heme b is bound at residue Ser-44. Phosphoserine is present on Ser-44. Residue His-61 coordinates O2. Heme b is bound by residues His-93 and Lys-96. At Tyr-134 the chain carries Nitrated tyrosine.

Belongs to the plant globin family. In terms of assembly, monomer. Post-translationally, nitrated in effective nodules and particularly in hypoxic conditions; this mechanism may play a protective role in the symbiosis by buffering toxic peroxynitrite NO(2)(-). Nitration level decrease during nodule senescence. In terms of processing, phosphorylation at Ser-44 disrupts the molecular environment of its porphyrin ring oxygen binding pocket, thus leading to a reduced oxygen consumption and to the delivery of oxygen O(2) to symbiosomes. In terms of tissue distribution, accumulates in root nodules after inoculation by bacteria of the genus Rhizobium.

Its subcellular location is the cytoplasm. It localises to the cytosol. The protein localises to the nucleus. Functionally, leghemoglobin that reversibly binds oxygen O(2) through a pentacoordinated heme iron. In root nodules, facilitates the diffusion of oxygen to the bacteroids while preventing the bacterial nitrogenase from being inactivated by buffering dioxygen, nitric oxide and carbon monoxide, and promoting the formation of reactive oxygen species (ROS, e.g. H(2)O(2)). This role is essential for symbiotic nitrogen fixation (SNF). This is Leghemoglobin 49 from Vicia faba (Broad bean).